Consider the following 303-residue polypeptide: MIIDVNIPIPFRLDKYLKRLYPLLTQGVIEKALRQKQITVNFQKAEANLRVKVGDTIFINDYFNLPVTQHETLVFADAEIKLAKKILTDYLIYEDDHLIAINKPASLATQGGSKINLSIDSALKYLNYQGADFKLVHRLDKETSGLLLIAKNYLSSVKLHNAFKEKLVIKKYFAITYGRPVKNVGTVKSNIGKSKRRLSKIANIDSDDGKLAITYYKLLKSLNNNLFLIEFMPVTGRMHQLRLHAQLLGCPILGDDKYGNKEIMPYSKYMFLHANNIYLSETIVGKEIKLEAKLPFYFTRRII.

Residues 11-87 (FRLDKYLKRL…AEIKLAKKIL (77 aa)) form the S4 RNA-binding domain. Residue Asp-140 is part of the active site.

The protein belongs to the pseudouridine synthase RluA family.

The catalysed reaction is uridine(955/2504/2580) in 23S rRNA = pseudouridine(955/2504/2580) in 23S rRNA. Its function is as follows. Responsible for synthesis of pseudouridine from uracil at positions 955, 2504 and 2580 in 23S ribosomal RNA. The protein is Ribosomal large subunit pseudouridine synthase C (rluC) of Rickettsia prowazekii (strain Madrid E).